The chain runs to 129 residues: CD59B glycoprotein (129 aa).

The N-terminal stretch at 1–23 (MRAQRGLILLLLLLAVFCSTAVS) is a signal peptide. The UPAR/Ly6 domain maps to 24–107 (LKCYNCLDPV…GLEEPNNAET (84 aa)). Disulfide bonds link cysteine 26–cysteine 49, cysteine 29–cysteine 36, cysteine 42–cysteine 62, cysteine 68–cysteine 86, and cysteine 87–cysteine 92. An N-linked (GlcNAc...) asparagine glycan is attached at asparagine 39. The GPI-anchor amidated asparagine moiety is linked to residue asparagine 104. Positions 105 to 129 (AETSSLRKTALLGTSVLVAILKFCF) are cleaved as a propeptide — removed in mature form.

As to quaternary structure, interacts with T-cell surface antigen CD2. N- and O-glycosylated. Widely expressed in the kidneys, brain, lungs, spleen and testis Testis-specific.

It is found in the cell membrane. The protein localises to the secreted. In terms of biological role, potent inhibitor of the complement membrane attack complex (MAC) action, which protects self-cells from damage during complement activation. Acts by binding to the beta-haipins of C8 (C8A and C8B) components of the assembling MAC, forming an intermolecular beta-sheet that prevents incorporation of the multiple copies of C9 required for complete formation of the osmolytic pore. This chain is CD59B glycoprotein, found in Mus musculus (Mouse).